We begin with the raw amino-acid sequence, 512 residues long: Lysine--tRNA ligase (512 aa).

2 residues coordinate Mg(2+): E408 and E415.

The protein belongs to the class-II aminoacyl-tRNA synthetase family. In terms of assembly, homodimer. The cofactor is Mg(2+).

It localises to the cytoplasm. It catalyses the reaction tRNA(Lys) + L-lysine + ATP = L-lysyl-tRNA(Lys) + AMP + diphosphate. The polypeptide is Lysine--tRNA ligase (Prochlorococcus marinus (strain MIT 9215)).